The chain runs to 451 residues: Epi-neemfruitin B 7-O-acetyltransferse L7AT (451 aa).

Active-site proton acceptor residues include H165 and D384.

Belongs to the plant acyltransferase family. In terms of assembly, monomer. In terms of tissue distribution, mainly expressed in petioles and, to a lower extent, in roots.

The catalysed reaction is epi-neemfruitin B + acetyl-CoA = 7-acetyl-epi-neemfruitin B + CoA. It functions in the pathway secondary metabolite biosynthesis; terpenoid biosynthesis. Its function is as follows. Acetyltransferase involved in the biosynthesis of limonoids triterpene natural products such as azadirachtin, an antifeedant widely used as bioinsecticide, and possessing many medicinal applications including anti-tumoral, anti-malarial, anti-rheumatic, antibacterial, anti-inflammatory, anti-pyretic and diuretic effects. Catalyzes the formation of 7-acetyl-epi-neemfruitin B from epi-neemfruitin B. The sequence is that of Epi-neemfruitin B 7-O-acetyltransferse L7AT from Melia azedarach (Chinaberry tree).